Consider the following 235-residue polypeptide: Uridylate kinase (235 aa).

9–12 provides a ligand contact to ATP; sequence KLSG. Residues 17–22 form an involved in allosteric activation by GTP region; that stretch reads GDQGYG. Glycine 51 contributes to the UMP binding site. Positions 52 and 56 each coordinate ATP. UMP is bound by residues aspartate 71 and 132 to 139; that span reads CGNPFFTT. Residues threonine 159, tyrosine 165, and aspartate 168 each contribute to the ATP site.

It belongs to the UMP kinase family. In terms of assembly, homohexamer.

It is found in the cytoplasm. The enzyme catalyses UMP + ATP = UDP + ADP. The protein operates within pyrimidine metabolism; CTP biosynthesis via de novo pathway; UDP from UMP (UMPK route): step 1/1. Its activity is regulated as follows. Allosterically activated by GTP. Inhibited by UTP. Functionally, catalyzes the reversible phosphorylation of UMP to UDP. The polypeptide is Uridylate kinase (Synechococcus sp. (strain WH7803)).